The chain runs to 202 residues: Proteasome subunit beta 1 (202 aa).

Position 1 (Met1) is a propeptide, removed in mature form; by autocatalysis. Thr2 serves as the catalytic Nucleophile.

The protein belongs to the peptidase T1B family. As to quaternary structure, the 20S proteasome core is composed of 14 alpha and 14 beta subunits that assemble into four stacked heptameric rings, resulting in a barrel-shaped structure. The two inner rings, each composed of seven catalytic beta subunits, are sandwiched by two outer rings, each composed of seven alpha subunits. The catalytic chamber with the active sites is on the inside of the barrel. Has a gated structure, the ends of the cylinder being occluded by the N-termini of the alpha-subunits. Is capped at one or both ends by the proteasome regulatory ATPase, PAN.

It localises to the cytoplasm. The catalysed reaction is Cleavage of peptide bonds with very broad specificity.. The formation of the proteasomal ATPase PAN-20S proteasome complex, via the docking of the C-termini of PAN into the intersubunit pockets in the alpha-rings, triggers opening of the gate for substrate entry. Interconversion between the open-gate and close-gate conformations leads to a dynamic regulation of the 20S proteasome proteolysis activity. Component of the proteasome core, a large protease complex with broad specificity involved in protein degradation. In Pyrobaculum aerophilum (strain ATCC 51768 / DSM 7523 / JCM 9630 / CIP 104966 / NBRC 100827 / IM2), this protein is Proteasome subunit beta 1.